The following is a 283-amino-acid chain: Bifunctional protein FolD (283 aa).

Residues 165 to 167 (GRS) and Ser190 each bind NADP(+).

This sequence belongs to the tetrahydrofolate dehydrogenase/cyclohydrolase family. Homodimer.

The enzyme catalyses (6R)-5,10-methylene-5,6,7,8-tetrahydrofolate + NADP(+) = (6R)-5,10-methenyltetrahydrofolate + NADPH. It catalyses the reaction (6R)-5,10-methenyltetrahydrofolate + H2O = (6R)-10-formyltetrahydrofolate + H(+). It participates in one-carbon metabolism; tetrahydrofolate interconversion. Functionally, catalyzes the oxidation of 5,10-methylenetetrahydrofolate to 5,10-methenyltetrahydrofolate and then the hydrolysis of 5,10-methenyltetrahydrofolate to 10-formyltetrahydrofolate. This Methylibium petroleiphilum (strain ATCC BAA-1232 / LMG 22953 / PM1) protein is Bifunctional protein FolD.